Reading from the N-terminus, the 478-residue chain is Membrane-bound lytic murein transglycosylase F (478 aa).

The signal sequence occupies residues 1–29 (MFPDSSYLFSMRSLSRFLIAIFGCGALLA). Positions 30–269 (SCDSFERSVL…RLLDRYYGHI (240 aa)) are non-LT domain. An LT domain region spans residues 271-478 (RLHHTDVNGI…RKEDDSWQEF (208 aa)). Residue Glu-316 is part of the active site.

The protein in the N-terminal section; belongs to the bacterial solute-binding protein 3 family. It in the C-terminal section; belongs to the transglycosylase Slt family.

It localises to the cell outer membrane. The enzyme catalyses Exolytic cleavage of the (1-&gt;4)-beta-glycosidic linkage between N-acetylmuramic acid (MurNAc) and N-acetylglucosamine (GlcNAc) residues in peptidoglycan, from either the reducing or the non-reducing ends of the peptidoglycan chains, with concomitant formation of a 1,6-anhydrobond in the MurNAc residue.. In terms of biological role, murein-degrading enzyme that degrades murein glycan strands and insoluble, high-molecular weight murein sacculi, with the concomitant formation of a 1,6-anhydromuramoyl product. Lytic transglycosylases (LTs) play an integral role in the metabolism of the peptidoglycan (PG) sacculus. Their lytic action creates space within the PG sacculus to allow for its expansion as well as for the insertion of various structures such as secretion systems and flagella. In Nitrosospira multiformis (strain ATCC 25196 / NCIMB 11849 / C 71), this protein is Membrane-bound lytic murein transglycosylase F.